The following is a 264-amino-acid chain: MDKSLKANCIGEFLGTALLIFFGVGCVAALKVAGASFGLWEISIMWGMGVALAVYATAGLSGAHLNPAVTIALWKFACFDGKKVIPYIISQMLGAFFAAALVYALYRNVFIDYETVHNIVRGTQESLSLAGTFSTYPHPSLSIGGAFAVEFVITAILMALIMALTDDGNGVPRGPLAPLLIGILIAVIGGAMGPLTGFAMNPARDFGPKFFAYLAGWGELALTGGREIPYFIVPMVAPVLGALAGAWLYKKAIGGNLPCNCGCE.

Over 1–3 (MDK) the chain is Cytoplasmic. The helical transmembrane segment at 4-32 (SLKANCIGEFLGTALLIFFGVGCVAALKV) threads the bilayer. At 33–37 (AGASF) the chain is on the periplasmic side. A helical membrane pass occupies residues 38-58 (GLWEISIMWGMGVALAVYATA). At 59 to 61 (GLS) the chain is on the cytoplasmic side. Residues 62-65 (GAHL) lie within the membrane without spanning it. Positions 66–68 (NPA) match the NPA 1 motif. An intramembrane region (helical) is located at residues 66 to 76 (NPAVTIALWKF). Residues 77-82 (ACFDGK) are Cytoplasmic-facing. Residues 83-106 (KVIPYIISQMLGAFFAAALVYALY) traverse the membrane as a helical segment. The Periplasmic portion of the chain corresponds to 107–141 (RNVFIDYETVHNIVRGTQESLSLAGTFSTYPHPSL). A helical membrane pass occupies residues 142 to 167 (SIGGAFAVEFVITAILMALIMALTDD). Over 168 to 175 (GNGVPRGP) the chain is Cytoplasmic. A helical membrane pass occupies residues 176 to 192 (LAPLLIGILIAVIGGAM). At 193 to 196 (GPLT) the chain is on the periplasmic side. Residues 197 to 200 (GFAM) lie within the membrane without spanning it. Residues 201 to 203 (NPA) carry the NPA 2 motif. The segment at residues 201-214 (NPARDFGPKFFAYL) is an intramembrane region (helical). Over 215–229 (AGWGELALTGGREIP) the chain is Periplasmic. Residues 230–252 (YFIVPMVAPVLGALAGAWLYKKA) form a helical membrane-spanning segment. The Cytoplasmic segment spans residues 253 to 264 (IGGNLPCNCGCE).

It belongs to the MIP/aquaporin (TC 1.A.8) family.

The protein resides in the cell inner membrane. It catalyses the reaction glycerol(in) = glycerol(out). Its function is as follows. Mediates glycerol diffusion across the cytoplasmic membrane via a pore-type mechanism. In Haemophilus influenzae (strain ATCC 51907 / DSM 11121 / KW20 / Rd), this protein is Glycerol uptake facilitator protein (glpF).